The chain runs to 94 residues: Co-chaperonin GroES (94 aa).

It belongs to the GroES chaperonin family. In terms of assembly, heptamer of 7 subunits arranged in a ring. Interacts with the chaperonin GroEL.

The protein resides in the cytoplasm. Together with the chaperonin GroEL, plays an essential role in assisting protein folding. The GroEL-GroES system forms a nano-cage that allows encapsulation of the non-native substrate proteins and provides a physical environment optimized to promote and accelerate protein folding. GroES binds to the apical surface of the GroEL ring, thereby capping the opening of the GroEL channel. This Geobacillus thermodenitrificans (strain NG80-2) protein is Co-chaperonin GroES.